The sequence spans 165 residues: Pro-MCH (165 aa).

An N-terminal signal peptide occupies residues 1-21 (MAKMTLSSYMLMLAFSLFSQG). A disordered region spans residues 66-89 (YKNDESGFMNDDDNKNSKNTGSKQ). Ile-143 carries the post-translational modification Isoleucine amide. Cysteines 153 and 162 form a disulfide.

This sequence belongs to the MCH family. Post-translationally, pro-MCH is processed differentially in the brain and in peripheral organs producing two neuropeptides; NEI and MCH. A third peptide, NGE, may also be produced. Preferential processing in neurons by prohormone convertase 2 (PC2) generates NEI. MCH is generated in neurons of the lateral hypothalmic area by several prohormone convertases including PC1/3, PC2 and PC5/6. In terms of tissue distribution, predominantly expressed in hypothalamus. Also found in heart, intestine, spleen and testis (spermatogonia, early spermatocytes and Sertoli cells). In brain only mature MCH and NEI peptides are present. In peripheral tissues a large product, encompassing the NEI and MCH domains of the precursor, is found predominantly.

Its subcellular location is the secreted. Functionally, MCH may act as a neurotransmitter or neuromodulator in a broad array of neuronal functions directed toward the regulation of goal-directed behavior, such as food intake, and general arousal. The sequence is that of Pro-MCH (Pmch) from Mus musculus (Mouse).